Here is a 256-residue protein sequence, read N- to C-terminus: Thiazole synthase (256 aa).

The Schiff-base intermediate with DXP role is filled by K96. 1-deoxy-D-xylulose 5-phosphate is bound by residues G157, 183-184 (AG), and 205-206 (NT).

It belongs to the ThiG family. Homotetramer. Forms heterodimers with either ThiH or ThiS.

The protein localises to the cytoplasm. It carries out the reaction [ThiS sulfur-carrier protein]-C-terminal-Gly-aminoethanethioate + 2-iminoacetate + 1-deoxy-D-xylulose 5-phosphate = [ThiS sulfur-carrier protein]-C-terminal Gly-Gly + 2-[(2R,5Z)-2-carboxy-4-methylthiazol-5(2H)-ylidene]ethyl phosphate + 2 H2O + H(+). It functions in the pathway cofactor biosynthesis; thiamine diphosphate biosynthesis. Its function is as follows. Catalyzes the rearrangement of 1-deoxy-D-xylulose 5-phosphate (DXP) to produce the thiazole phosphate moiety of thiamine. Sulfur is provided by the thiocarboxylate moiety of the carrier protein ThiS. In vitro, sulfur can be provided by H(2)S. This is Thiazole synthase from Bacillus cytotoxicus (strain DSM 22905 / CIP 110041 / 391-98 / NVH 391-98).